We begin with the raw amino-acid sequence, 534 residues long: Pentatricopeptide repeat-containing protein At5g50990 (534 aa).

PPR repeat units follow at residues 128-158, 164-198, 199-229, 230-264, 265-295, and 301-331; these read NVITWNLMIGGYVRNVQYEEALKALKNMLSF, NKFSFASSLAACARLGDLHHAKWVHSLMIDSGIEL, NAILSSALVDVYAKCGDIGTSREVFYSVKRN, DVSIWNAMITGFATHGLATEAIRVFSEMEAEHVSP, DSITFLGLLTTCSHCGLLEEGKEYFGLMSRR, and KLEHYGAMVDLLGRAGRVKEAYELIESMPIE. Positions 336 to 408 are type E motif; sequence IWRSLLSSSR…AKGKSWLEFG (73 aa). The interval 409–439 is type E(+) motif; sequence GMIHRFKAGDTSHIETKAIYKVLEGLIQKTK. Positions 440–534 are type DYW motif; sequence SQGFVSDTDL…DGLCSCRDYW (95 aa).

The protein belongs to the PPR family. PCMP-H subfamily.

In Arabidopsis thaliana (Mouse-ear cress), this protein is Pentatricopeptide repeat-containing protein At5g50990 (PCMP-H59).